The following is a 183-amino-acid chain: Ribosome rescue factor SmrB (183 aa).

Residues 98 to 173 (LDLHGLTQLQ…GDAALLVLIE (76 aa)) enclose the Smr domain.

The protein belongs to the SmrB family. Associates with collided ribosomes, but not with correctly translating polysomes.

Acts as a ribosome collision sensor. Detects stalled/collided disomes (pairs of ribosomes where the leading ribosome is stalled and a second ribosome has collided with it) and endonucleolytically cleaves mRNA at the 5' boundary of the stalled ribosome. Stalled/collided disomes form a new interface (primarily via the 30S subunits) that binds SmrB. Cleaved mRNA becomes available for tmRNA ligation, leading to ribosomal subunit dissociation and rescue of stalled ribosomes. This is Ribosome rescue factor SmrB from Escherichia coli (strain 55989 / EAEC).